The following is a 445-amino-acid chain: Argininosuccinate synthase (445 aa).

ATP-binding positions include 17 to 25 (AFSGGLDTS) and Ala43. Position 99 (Tyr99) interacts with L-citrulline. Residues Gly129 and Thr131 each coordinate ATP. 3 residues coordinate L-aspartate: Thr131, Asn135, and Asp136. Asn135 is a binding site for L-citrulline. Asp136 contributes to the ATP binding site. L-citrulline is bound by residues Arg139 and Ser192. Residue Asp194 participates in ATP binding. Thr201, Glu203, and Glu280 together coordinate L-citrulline.

Belongs to the argininosuccinate synthase family. Type 2 subfamily. As to quaternary structure, homotetramer.

The protein resides in the cytoplasm. The enzyme catalyses L-citrulline + L-aspartate + ATP = 2-(N(omega)-L-arginino)succinate + AMP + diphosphate + H(+). It functions in the pathway amino-acid biosynthesis; L-arginine biosynthesis; L-arginine from L-ornithine and carbamoyl phosphate: step 2/3. This Bradyrhizobium diazoefficiens (strain JCM 10833 / BCRC 13528 / IAM 13628 / NBRC 14792 / USDA 110) protein is Argininosuccinate synthase (argG).